Here is a 99-residue protein sequence, read N- to C-terminus: Putative protein YgeP (99 aa).

The chain is Putative protein YgeP (ygeP) from Escherichia coli (strain K12).